An 856-amino-acid chain; its full sequence is Leucine--tRNA ligase (856 aa).

The short motif at 42 to 52 is the 'HIGH' region element; the sequence is PYPSGNLHMGH. The short motif at 617–621 is the 'KMSKS' region element; it reads KMSKS. Lys-620 lines the ATP pocket.

Belongs to the class-I aminoacyl-tRNA synthetase family.

Its subcellular location is the cytoplasm. The catalysed reaction is tRNA(Leu) + L-leucine + ATP = L-leucyl-tRNA(Leu) + AMP + diphosphate. This chain is Leucine--tRNA ligase, found in Rippkaea orientalis (strain PCC 8801 / RF-1) (Cyanothece sp. (strain PCC 8801)).